The sequence spans 276 residues: Syntaxin-12 (276 aa).

Residue Ser2 is modified to N-acetylserine. At 2-248 the chain is on the cytoplasmic side; sequence SYGPLDMYRN…RAAYYQKKSR (247 aa). The stretch at 33 to 131 forms a coiled coil; it reads IQRISQATAQ…RRVSEKEKES (99 aa). 4 positions are modified to phosphoserine: Ser139, Ser142, Ser218, and Ser225. In terms of domain architecture, t-SNARE coiled-coil homology spans 178-240; that stretch reads LELIKERETA…ERATEQLQRA (63 aa). The helical; Anchor for type IV membrane protein transmembrane segment at 249-269 threads the bilayer; the sequence is KKMCILVLVLSVIILILGLII. The Vesicular portion of the chain corresponds to 270–276; the sequence is WLVYKTK.

Belongs to the syntaxin family. Interacts with NAPA and SNAP23. Identified in a complex containing STX6, STX12, VAMP4 and VTI1A. Associates with the BLOC-1 complex. Interacts with BLOC1S6. Interacts with GRIPAP1. Forms a complex with GRIP1, GRIA2 and NSG1; controls the intracellular fate of AMPAR and the endosomal sorting of the GRIA2 subunit toward recycling and membrane targeting. Interacts with NSG1. Interacts with TPC1. Interacts (via N-terminus) with VPS13B.

The protein resides in the endosome membrane. Its subcellular location is the golgi apparatus membrane. The protein localises to the endomembrane system. It localises to the early endosome membrane. It is found in the recycling endosome membrane. Functionally, SNARE promoting fusion of transport vesicles with target membranes. Together with SNARE STX6, promotes movement of vesicles from endosomes to the cell membrane, and may therefore function in the endocytic recycling pathway. Through complex formation with GRIP1, GRIA2 and NSG1 controls the intracellular fate of AMPAR and the endosomal sorting of the GRIA2 subunit toward recycling and membrane targeting. The sequence is that of Syntaxin-12 (STX12) from Homo sapiens (Human).